The primary structure comprises 181 residues: ATP synthase subunit delta (181 aa).

The protein belongs to the ATPase delta chain family. As to quaternary structure, F-type ATPases have 2 components, F(1) - the catalytic core - and F(0) - the membrane proton channel. F(1) has five subunits: alpha(3), beta(3), gamma(1), delta(1), epsilon(1). CF(0) has four main subunits: a(1), b(1), b'(1) and c(10-14). The alpha and beta chains form an alternating ring which encloses part of the gamma chain. F(1) is attached to F(0) by a central stalk formed by the gamma and epsilon chains, while a peripheral stalk is formed by the delta, b and b' chains.

It is found in the cellular thylakoid membrane. Its function is as follows. F(1)F(0) ATP synthase produces ATP from ADP in the presence of a proton or sodium gradient. F-type ATPases consist of two structural domains, F(1) containing the extramembraneous catalytic core and F(0) containing the membrane proton channel, linked together by a central stalk and a peripheral stalk. During catalysis, ATP synthesis in the catalytic domain of F(1) is coupled via a rotary mechanism of the central stalk subunits to proton translocation. Functionally, this protein is part of the stalk that links CF(0) to CF(1). It either transmits conformational changes from CF(0) to CF(1) or is implicated in proton conduction. This Synechococcus sp. (strain RCC307) protein is ATP synthase subunit delta.